We begin with the raw amino-acid sequence, 78 residues long: Probable [Fe-S]-dependent transcriptional repressor (78 aa).

Residues Cys-56, Cys-61, Cys-64, and Cys-70 each coordinate iron-sulfur cluster.

Belongs to the FeoC family.

Its function is as follows. May function as a transcriptional regulator that controls feoABC expression. The chain is Probable [Fe-S]-dependent transcriptional repressor from Enterobacter sp. (strain 638).